Reading from the N-terminus, the 653-residue chain is Endoglin (653 aa).

Positions M1–G24 are cleaved as a signal peptide. The Extracellular portion of the chain corresponds to L25–G581. The interval E27 to T44 is OR1, N-terminal part. The tract at residues E27 to S336 is required for interaction with GDF2. Disulfide bonds link C31–C206, C51–C181, C241–C329, C349–C381, C362–C442, C393–C411, and C493–C549. Residues S45 to H198 form an OR2 region. An N-linked (GlcNAc...) asparagine glycan is attached at N57. The segment at T199–C329 is OR1, C-terminal part. An essential for interaction with GDF2 region spans residues K269 to F281. N306 carries an N-linked (GlcNAc...) asparagine glycan. In terms of domain architecture, ZP spans C362 to A512. Residues L582 to W606 traverse the membrane as a helical segment. Topologically, residues Y607–A653 are cytoplasmic. Residues A625–S634 show a composition bias toward low complexity. A disordered region spans residues A625–A653. Residues T635–A653 show a composition bias toward polar residues. Phosphoserine; by TGFBR1 is present on residues S641 and S644.

Homodimer; disulfide-linked. Forms a heteromeric complex with the signaling receptors for transforming growth factor-beta: TGFBR1 and/or TGFBR2. It is able to bind TGFB1 and TGFB2 with high affinity, but not TGFB3. Interacts with GDF2, forming a heterotetramer with a 2:2 stoichiometry. Interacts with ACVRL1. Can form a heteromeric complex with GDF2 and ACVRL1. Interacts with BMP10. Interacts with DYNLT4. Interacts with ARRB2.

It is found in the cell membrane. In terms of biological role, vascular endothelium glycoprotein that plays an important role in the regulation of angiogenesis. Required for normal structure and integrity of adult vasculature. Regulates the migration of vascular endothelial cells. Required for normal extraembryonic angiogenesis and for embryonic heart development. May regulate endothelial cell shape changes in response to blood flow, which drive vascular remodeling and establishment of normal vascular morphology during angiogenesis. May play a role in the binding of endothelial cells to integrins. Acts as a TGF-beta coreceptor and is involved in the TGF-beta/BMP signaling cascade that ultimately leads to the activation of SMAD transcription factors. Required for GDF2/BMP9 signaling through SMAD1 in endothelial cells and modulates TGFB1 signaling through SMAD3. The protein is Endoglin (ENG) of Sus scrofa (Pig).